The primary structure comprises 358 residues: Electron transfer flavoprotein subunit alpha, mitochondrial (358 aa).

298–326 (LYMAFGVSGAIQHLAGMRDSKVIVAVNKD) serves as a coordination point for FAD.

Belongs to the ETF alpha-subunit/FixB family. In terms of assembly, heterodimer of an alpha and a beta subunit. The cofactor is FAD.

It localises to the mitochondrion matrix. In terms of biological role, the electron transfer flavoprotein serves as a specific electron acceptor for several dehydrogenases, including five acyl-CoA dehydrogenases, glutaryl-CoA and sarcosine dehydrogenase. It transfers the electrons to the main mitochondrial respiratory chain via ETF-ubiquinone oxidoreductase (ETF dehydrogenase). This is Electron transfer flavoprotein subunit alpha, mitochondrial (ETFA) from Oryza sativa subsp. indica (Rice).